A 415-amino-acid chain; its full sequence is Serine hydroxymethyltransferase (415 aa).

(6S)-5,6,7,8-tetrahydrofolate is bound by residues leucine 117 and glycine 121 to leucine 123. The residue at position 226 (lysine 226) is an N6-(pyridoxal phosphate)lysine. Glutamate 241 contributes to the (6S)-5,6,7,8-tetrahydrofolate binding site.

This sequence belongs to the SHMT family. In terms of assembly, homodimer. The cofactor is pyridoxal 5'-phosphate.

The protein localises to the cytoplasm. The enzyme catalyses (6R)-5,10-methylene-5,6,7,8-tetrahydrofolate + glycine + H2O = (6S)-5,6,7,8-tetrahydrofolate + L-serine. It participates in one-carbon metabolism; tetrahydrofolate interconversion. Its pathway is amino-acid biosynthesis; glycine biosynthesis; glycine from L-serine: step 1/1. In terms of biological role, catalyzes the reversible interconversion of serine and glycine with tetrahydrofolate (THF) serving as the one-carbon carrier. This reaction serves as the major source of one-carbon groups required for the biosynthesis of purines, thymidylate, methionine, and other important biomolecules. Also exhibits THF-independent aldolase activity toward beta-hydroxyamino acids, producing glycine and aldehydes, via a retro-aldol mechanism. The protein is Serine hydroxymethyltransferase of Bacillus velezensis (strain DSM 23117 / BGSC 10A6 / LMG 26770 / FZB42) (Bacillus amyloliquefaciens subsp. plantarum).